Reading from the N-terminus, the 723-residue chain is Beta-xylosidase (723 aa).

The N-terminal stretch at 1–19 (MKKLWLMGLLLASFFTTVA) is a signal peptide.

It belongs to the glycosyl hydrolase 3 family.

The protein resides in the periplasm. Functionally, xylosidase involved in ulvan degradation. Ulvan is the main polysaccharide component of the Ulvales (green seaweed) cell wall. It is composed of disaccharide building blocks comprising 3-sulfated rhamnose (Rha3S) linked to D-glucuronic acid (GlcA), L-iduronic acid (IduA), or D-xylose (Xyl). Beta-xylosidase converts Xyl-Rha3S, a product of alpha-L-rhamnosidase acting on Rha-Xyl-Rha3S oligosaccharides, further to Xyl and Rha3S. The enzyme is able to degrade 4-methylumbelliferyl-beta-D-xylopyranoside (MUX) in vitro. This chain is Beta-xylosidase, found in Formosa agariphila (strain DSM 15362 / KCTC 12365 / LMG 23005 / KMM 3901 / M-2Alg 35-1).